The sequence spans 86 residues: MGRKDSSTTKLPVDQYRKQIGKQDYKKTKPILRATKLKAEAKKTAIGIKEVGLMLAAILALLLAFYAFFYLRLSTNIDADLDPDED.

The chain crosses the membrane as a helical span at residues 51–71; the sequence is VGLMLAAILALLLAFYAFFYL.

It belongs to the TRIQK family.

Its subcellular location is the endoplasmic reticulum membrane. In terms of biological role, may play a role in cell growth and maintenance of cell morphology. The protein is Triple QxxK/R motif-containing protein (Triqk) of Rattus norvegicus (Rat).